Consider the following 57-residue polypeptide: Aspartyl-phosphate phosphatase YnzD (57 aa).

The protein belongs to the spo0E family.

Functionally, aspartyl-phosphate phosphatase which specifically dephosphorylates the sporulation transcription factor Spo0A-P and negatively regulates the sporulation initiation pathway in order to control the proper timing of sporulation. This chain is Aspartyl-phosphate phosphatase YnzD (ynzD), found in Bacillus subtilis (strain 168).